A 401-amino-acid polypeptide reads, in one-letter code: MKIDPVELTKKLISFKSITPRDDGAIEHIAAILEKSGFDCEILEFGDNKTKVKNLYAKYINGVQNLCFAGHVDVVPPGQLKDWISDPFSPEVRDGLLYGRGATDMKSGIAAFITAMVDLVAEKFRFNGSISALITSAEESTEEYGTKAVLKWMESKHKKIDYCVVAEPTSSEKLGDTIKIGRRGSATFELICHGKQGHVAYPDLADNPIYKMISILNRIKDTTFDGGNKYFQPSNCEITTIDVGNSTDNVILDSITAGFNIRYNNMQTPDGLYKLIDEICFSVTNDYKLSMHSSRGAFLSTPDRNTDVMFDAINKVTNIDAVLATSGGTSDAAFIKDVCPVIEFGMINKTSHQVNECVLVNDIHKLTAIYKEFIKSYFYPTNRILNQINVIGNVPDSPLLA.

Histidine 71 contacts Zn(2+). Aspartate 73 is an active-site residue. Aspartate 104 serves as a coordination point for Zn(2+). The Proton acceptor role is filled by glutamate 138. Residues glutamate 139, glutamate 167, and histidine 352 each coordinate Zn(2+).

Belongs to the peptidase M20A family. DapE subfamily. In terms of assembly, homodimer. Zn(2+) is required as a cofactor. The cofactor is Co(2+).

It catalyses the reaction N-succinyl-(2S,6S)-2,6-diaminopimelate + H2O = (2S,6S)-2,6-diaminopimelate + succinate. It participates in amino-acid biosynthesis; L-lysine biosynthesis via DAP pathway; LL-2,6-diaminopimelate from (S)-tetrahydrodipicolinate (succinylase route): step 3/3. In terms of biological role, catalyzes the hydrolysis of N-succinyl-L,L-diaminopimelic acid (SDAP), forming succinate and LL-2,6-diaminopimelate (DAP), an intermediate involved in the bacterial biosynthesis of lysine and meso-diaminopimelic acid, an essential component of bacterial cell walls. This Wolbachia sp. subsp. Brugia malayi (strain TRS) protein is Succinyl-diaminopimelate desuccinylase.